The sequence spans 334 residues: ADP-L-glycero-D-manno-heptose-6-epimerase (334 aa).

NADP(+) contacts are provided by residues 11–12 (FI), 32–33 (DN), lysine 39, lysine 54, 77–81 (QGACS), and asparagine 94. The Proton acceptor role is filled by tyrosine 141. Lysine 145 is an NADP(+) binding site. Residue asparagine 171 participates in substrate binding. Positions 172 and 180 each coordinate NADP(+). The active-site Proton acceptor is lysine 180. Residues arginine 182, histidine 189, 203–206 (FGSN), arginine 216, and tyrosine 295 contribute to the substrate site.

This sequence belongs to the NAD(P)-dependent epimerase/dehydratase family. HldD subfamily. In terms of assembly, homopentamer. It depends on NADP(+) as a cofactor.

The enzyme catalyses ADP-D-glycero-beta-D-manno-heptose = ADP-L-glycero-beta-D-manno-heptose. The protein operates within nucleotide-sugar biosynthesis; ADP-L-glycero-beta-D-manno-heptose biosynthesis; ADP-L-glycero-beta-D-manno-heptose from D-glycero-beta-D-manno-heptose 7-phosphate: step 4/4. Catalyzes the interconversion between ADP-D-glycero-beta-D-manno-heptose and ADP-L-glycero-beta-D-manno-heptose via an epimerization at carbon 6 of the heptose. The protein is ADP-L-glycero-D-manno-heptose-6-epimerase of Neisseria gonorrhoeae (strain ATCC 700825 / FA 1090).